The sequence spans 366 residues: MEPQLNQEVINTAALHDGPIETDAVIVGAGPVGLFQVFELGLLEIKAHIIDSLAYPGGQPIELYPDKPIYDIPAIPVCTGKELTDNLMKQIEPFGPTFHLGQEVSVLEKQEDGRFFVETSKGTKFLTKTIFIAAGVGAFQPKLLRVDGLDKFDNSQLFYRVKNPADFAGKNLIIVGGGDSALDWALNFVAEGPNKAESVILIHRRDGFKAAPANVAKMKELCDAYEMQFIIGQVTGYDEKEGRLTAAKVTGADGITRVVPLDVMLVFFGLSPKLGPIAHWGLDIERKQIKVDTEKFSTNIPGIFAVGDINTYPGKKKLILSGFHECALAAFGAAPFIFPDKKIHLQYTTTSPKLHKVLGVESPVFD.

Residues Asp-51, Gln-59, Tyr-64, Val-104, Phe-139, Asp-308, and Thr-349 each contribute to the FAD site.

Belongs to the ferredoxin--NADP reductase type 2 family. In terms of assembly, homodimer. It depends on FAD as a cofactor.

The catalysed reaction is 2 reduced [2Fe-2S]-[ferredoxin] + NADP(+) + H(+) = 2 oxidized [2Fe-2S]-[ferredoxin] + NADPH. This Polaromonas naphthalenivorans (strain CJ2) protein is Ferredoxin--NADP reductase.